We begin with the raw amino-acid sequence, 183 residues long: Ion-translocating oxidoreductase complex subunit B (183 aa).

Residues 1–23 (MLSALLVMAAIAVVLGAALGFAA) form a hydrophobic region. In terms of domain architecture, 4Fe-4S spans 29–88 (EGDPLVDKIDAILPQTQCGQCGYPGCKPYAQAIAQGEADINQCPPGGEEGVRKLADLLGR). [4Fe-4S] cluster-binding residues include Cys46, Cys49, Cys54, Cys71, Cys113, Cys116, Cys119, Cys123, Cys143, Cys146, Cys149, and Cys153. 2 consecutive 4Fe-4S ferredoxin-type domains span residues 104–133 (AVAY…GAAK) and 135–163 (MHTV…MEPV).

It belongs to the 4Fe4S bacterial-type ferredoxin family. RnfB subfamily. The complex is composed of six subunits: RnfA, RnfB, RnfC, RnfD, RnfE and RnfG. [4Fe-4S] cluster is required as a cofactor.

Its subcellular location is the cell inner membrane. Part of a membrane-bound complex that couples electron transfer with translocation of ions across the membrane. This Azoarcus sp. (strain BH72) protein is Ion-translocating oxidoreductase complex subunit B.